Here is a 733-residue protein sequence, read N- to C-terminus: MSTAEPAPDPTNPSTSGLAPTTNGIGSPPPTASAATKFSILTKFLRRKNQVHTTTAQQNEFMQKYMPNGNSNAVQPAATGGQPASSDGGSAIEVPPPKESYAVRIRKYLANYTQDPSTDNFYYWTCVVTVAYIYNLLFVIARQVFNDLIGPSSQSLCRFYNGTLNSTTQVECTYNMLTNMKEMPTYSQYPDLGWSKYWHFRMLWVFFDLLMDCVYLIDTFLNYRMGYMDQGLVVREAEKVTKAYWQSKQYRIDGISLIPLDYILGWPIPYINWRGLPILRLNRLIRYKRVRNCLERTETRSSMPNAFRVVVVVWYIVIIIHWNACLYFWISEWIGLGTDAWVYGHLNKQSLPDDITDTLLRRYVYSFYWSTLILTTIGEVPSPVRNIEYAFVTLDLMCGVLIFATIVGNVGSMISNMSAARTEFQNKMDGIKQYMELRKVSKQLEIRVIKWFDYLWTNKQSLSDQQVLKVLPDKLQAEIAMQVHFETLRKVRIFQDCEAGLLAELVLKLQLQVFSPGDFICKKGDIGREMYIVKRGRLQVVDDDGKKVFVTLQEGSVFGELSILNIAGSKNGNRRTANVRSVGYTDLFVLSKTDLWNALREYPDARKLLLAKGREILKKDNLLDENAPEEQKTVEEIAEHLNNAVKVLQTRMARLIVEHSSTEGKLMKRIEMLEKHLSRYKALARRQKTMHGVSIDGGDISTDGVDERVRPPRLRQTKTIDLPTGTESESLLK.

2 disordered regions span residues 1-33 and 67-95; these read MSTA…PTAS and PNGN…IEVP. The Cytoplasmic segment spans residues 1–125; the sequence is MSTAEPAPDP…PSTDNFYYWT (125 aa). Over residues 12 to 25 the composition is skewed to polar residues; the sequence is NPSTSGLAPTTNGI. Residues 126–148 traverse the membrane as a helical segment; that stretch reads CVVTVAYIYNLLFVIARQVFNDL. Residues 149-197 are Extracellular-facing; the sequence is IGPSSQSLCRFYNGTLNSTTQVECTYNMLTNMKEMPTYSQYPDLGWSKY. Residues 198 to 217 form a helical membrane-spanning segment; sequence WHFRMLWVFFDLLMDCVYLI. Over 218-251 the chain is Cytoplasmic; it reads DTFLNYRMGYMDQGLVVREAEKVTKAYWQSKQYR. A helical transmembrane segment spans residues 252–265; that stretch reads IDGISLIPLDYILG. Residues 266–276 are Extracellular-facing; the sequence is WPIPYINWRGL. Residues 277–287 traverse the membrane as a helical segment; the sequence is PILRLNRLIRY. The Cytoplasmic portion of the chain corresponds to 288–308; sequence KRVRNCLERTETRSSMPNAFR. Residues 309–331 form a helical membrane-spanning segment; the sequence is VVVVVWYIVIIIHWNACLYFWIS. Over 332–362 the chain is Extracellular; the sequence is EWIGLGTDAWVYGHLNKQSLPDDITDTLLRR. The next 2 helical transmembrane spans lie at 363 to 385 and 386 to 411; these read YVYS…SPVR and NIEY…GNVG. Residues 376-379 are selectivity filter; that stretch reads TIGE. A Na(+)-binding site is contributed by Glu379. Over 412-733 the chain is Cytoplasmic; sequence SMISNMSAAR…TGTESESLLK (322 aa). The interval 419–496 is C-linker; the sequence is AARTEFQNKM…TLRKVRIFQD (78 aa). The tract at residues 493–607 is cyclic nucleotide-binding domain; that stretch reads IFQDCEAGLL…ALREYPDARK (115 aa). Gly559 contributes to the 3',5'-cyclic GMP binding site. Glu560 serves as a coordination point for 3',5'-cyclic AMP. The 3',5'-cyclic GMP site is built by Ser562, Arg575, Thr576, Lys619, and Asp620. Arg575 contributes to the 3',5'-cyclic AMP binding site. Positions 694-733 are disordered; sequence SIDGGDISTDGVDERVRPPRLRQTKTIDLPTGTESESLLK.

Belongs to the cyclic nucleotide-gated cation channel (TC 1.A.1.5) family. As to quaternary structure, homotetramer. As to expression, expressed at the sensory endings of thermosensory, gustatory, and olfactory neurons.

The protein resides in the cell membrane. Its subcellular location is the cell projection. The protein localises to the cilium. It catalyses the reaction Ca(2+)(in) = Ca(2+)(out). It carries out the reaction Na(+)(in) = Na(+)(out). The enzyme catalyses K(+)(in) = K(+)(out). Pore-forming subunit of the cyclic nucleotide-gated channel. Required for normal thermosensation and chemosensation sensory behavior. Required, downstream of receptor-type guanylate cyclase gcy-9, for CO2-mediated responses in BAG neurons. Required, downstream of receptor-type guanylate cyclase gcy-14, for alkaline pH-mediated responses in ASE-left (ASEL) neurons. Involved in the development of ASJ sensory neuron axon during late larval stages and in the maintenance of normal axon morphology in the adult. Regulates dauer formation. Required for the calcium flux to the cytoplasm in the ASJ sensory neurons upon the onset and removal of a nitric oxide (NO) stimulus, thereby promoting the ASJ-mediated behavioral avoidance response to NO-producing organisms like P.aeruginosa. In ASI and ASJ sensory neurons, controls behavioral response to P.aeruginosa by up-regulating the transcription of daf-7, a member of the TGF-beta family. In AWB and AWC sensory neurons, mediates the recognition of food odors which subsequently allows for the detection of preferred food sources. In AWC neurons, acts to promote expression of srsx-3, a member of the GPCR family. Binding to cGMP results in conformational changes at the hydrophobic gate that converts the protein from an inactive closed state to an active open state. The sequence is that of Cyclic nucleotide-gated channel (tax-4) from Caenorhabditis elegans.